The chain runs to 148 residues: Proteasome chaperone 4 (148 aa).

This sequence belongs to the PSMG4 family. As to quaternary structure, component of the 20S proteasome chaperone. Forms a heterodimer with IRC25 that binds to proteasome precursors. Interacts with POP2.

The protein localises to the cytoplasm. Involved in 20S proteasome assembly, facilitating the alpha-ring formation. Involved in maintenance of telomere length. This chain is Proteasome chaperone 4 (POC4), found in Saccharomyces cerevisiae (strain ATCC 204508 / S288c) (Baker's yeast).